The following is a 310-amino-acid chain: MKVGIVGSGMVGSATAYALALLGVAREVVLVDLDRKLAQAHAEDILHATPFAHPVWVRAGSYGDLEGARAVVLAAGVAQRPGETRLQLLDRNAQVFAQVVPRVLEAAPEAVLLVATNPVDVMTQVAYRLSGLPPGRVVGSGTILDTARFRALLAEYLRVAPQSVHAYVLGEHGDSEVLVWSSAQVGGVPLLEFAEARGRALSPEDRARIDEGVRRAAYRIIEGKGATYYGIGAGLARLVRAILTDEKGVYTVSAFTPEVEGVLEVSLSLPRILGAGGVEGTVYPSLSPEEREALRRSAEILKEAAFALGF.

NAD(+) contacts are provided by residues 10 to 11 (MV), aspartate 32, tyrosine 62, and 76 to 77 (GV). Substrate-binding positions include glutamine 79, arginine 85, and 117–120 (NPVD). NAD(+)-binding positions include 115-117 (ATN) and serine 140. Residue 145-148 (DTAR) coordinates substrate. Beta-D-fructose 1,6-bisphosphate is bound by residues arginine 150 and histidine 165. The Proton acceptor role is filled by histidine 172. Position 218 is a phosphotyrosine (tyrosine 218). A substrate-binding site is contributed by threonine 227.

This sequence belongs to the LDH/MDH superfamily. LDH family. In terms of assembly, homotetramer.

It is found in the cytoplasm. The catalysed reaction is (S)-lactate + NAD(+) = pyruvate + NADH + H(+). The protein operates within fermentation; pyruvate fermentation to lactate; (S)-lactate from pyruvate: step 1/1. With respect to regulation, allosterically activated by fructose 1,6-bisphosphate (FBP). In terms of biological role, catalyzes the conversion of lactate to pyruvate. This is L-lactate dehydrogenase from Thermus thermophilus (strain ATCC 27634 / DSM 579 / HB8).